Here is a 293-residue protein sequence, read N- to C-terminus: Mycothiol S-conjugate amidase (293 aa).

Zn(2+) is bound by residues H13, D16, and H144.

The protein belongs to the MshB deacetylase family. Mca subfamily. Monomer. Zn(2+) serves as cofactor.

The catalysed reaction is mycothiol S-conjugate + H2O = an N-acetyl-L-cysteine-S-conjugate + 1D-myo-inositol 2-amino-2-deoxy-alpha-D-glucopyranoside. Its function is as follows. A mycothiol (MSH, N-acetylcysteinyl-glucosaminyl-inositol) S-conjugate amidase, it recycles conjugated MSH to the N-acetyl cysteine conjugate (AcCys S-conjugate, a mercapturic acid) and the MSH precursor. Involved in MSH-dependent detoxification of a number of alkylating agents and antibiotics. The sequence is that of Mycothiol S-conjugate amidase from Streptomyces coelicolor (strain ATCC BAA-471 / A3(2) / M145).